A 256-amino-acid chain; its full sequence is ATP synthase peripheral stalk subunit b, mitochondrial (256 aa).

Residues 1–42 constitute a mitochondrion transit peptide; that stretch reads MLSRVVLSAAATAASSLKNAAFLGPGVLQATRTFHTGQPHLA. Residue Lys131 is modified to N6-succinyllysine. Residues Lys139, Lys154, Lys162, Lys221, Lys233, and Lys244 each carry the N6-acetyllysine modification.

This sequence belongs to the eukaryotic ATPase B chain family. Component of the ATP synthase complex composed at least of ATP5F1A/subunit alpha, ATP5F1B/subunit beta, ATP5MC1/subunit c (homooctomer), MT-ATP6/subunit a, MT-ATP8/subunit 8, ATP5ME/subunit e, ATP5MF/subunit f, ATP5MG/subunit g, ATP5MK/subunit k, ATP5MJ/subunit j, ATP5F1C/subunit gamma, ATP5F1D/subunit delta, ATP5F1E/subunit epsilon, ATP5PF/subunit F6, ATP5PB/subunit b, ATP5PD/subunit d, ATP5PO/subunit OSCP. ATP synthase complex consists of a soluble F(1) head domain (subunits alpha(3) and beta(3)) - the catalytic core - and a membrane F(0) domain - the membrane proton channel (subunits c, a, 8, e, f, g, k and j). These two domains are linked by a central stalk (subunits gamma, delta, and epsilon) rotating inside the F1 region and a stationary peripheral stalk (subunits F6, b, d, and OSCP).

It localises to the mitochondrion. Its subcellular location is the mitochondrion inner membrane. Functionally, subunit b, of the mitochondrial membrane ATP synthase complex (F(1)F(0) ATP synthase or Complex V) that produces ATP from ADP in the presence of a proton gradient across the membrane which is generated by electron transport complexes of the respiratory chain. ATP synthase complex consist of a soluble F(1) head domain - the catalytic core - and a membrane F(1) domain - the membrane proton channel. These two domains are linked by a central stalk rotating inside the F(1) region and a stationary peripheral stalk. During catalysis, ATP synthesis in the catalytic domain of F(1) is coupled via a rotary mechanism of the central stalk subunits to proton translocation. In vivo, can only synthesize ATP although its ATP hydrolase activity can be activated artificially in vitro. Part of the complex F(0) domain. Part of the complex F(0) domain and the peripheric stalk, which acts as a stator to hold the catalytic alpha(3)beta(3) subcomplex and subunit a/ATP6 static relative to the rotary elements. This Pongo abelii (Sumatran orangutan) protein is ATP synthase peripheral stalk subunit b, mitochondrial.